The primary structure comprises 91 residues: Putative transmembrane protein encoded by LINC00862 (91 aa).

Residues 49-69 (IMALILMPSLHCFGNILILLF) traverse the membrane as a helical segment.

The protein resides in the membrane. In Homo sapiens (Human), this protein is Putative transmembrane protein encoded by LINC00862 (LINC00862).